We begin with the raw amino-acid sequence, 714 residues long: Angiogenic factor with G patch and FHA domains 1 (714 aa).

Residues 1–18 show a composition bias toward pro residues; sequence MASEAPSPPRSPPPPTSP. Disordered stretches follow at residues 1–22, 259–307, and 322–384; these read MASE…EPEL, QPYP…HTSC, and IGIH…SYDE. Residue Ala2 is modified to N-acetylalanine. A phosphoserine mark is found at Ser7 and Ser11. Positions 18 to 88 form a coiled coil; sequence PEPELAQLRR…QRGRNEDNKK (71 aa). Over residues 279–298 the composition is skewed to basic and acidic residues; the sequence is KDPDSSATNEEKDLNSEDQK. Positions 335–355 are enriched in polar residues; it reads VPTSGNTIESPLHENISNSTS. Ser344 carries the phosphoserine modification. Residues 364–383 show a composition bias toward acidic residues; the sequence is TDSEPEEGEITDSQTEDSYD. An FHA domain is found at 434–487; the sequence is ATIGREKDMEHTLRIPEVGVSKFHAEIYFDHDLQSYVLVDQGSQNGTIVNGKQI. The span at 586–609 shows a compositional bias: basic and acidic residues; that stretch reads KYKDRAGKRREQVGSEGTFQRDDA. 2 disordered regions span residues 586-617 and 655-714; these read KYKD…HSEI and RTHA…GTLE. Positions 619 to 665 constitute a G-patch domain; sequence DSNKGRKMLEKMGWKKGEGLGKDGGGMKTPIQLQLRRTHAGLGTGKP. Lys664 carries the N6-acetyllysine modification. The segment covering 680–690 has biased composition (basic and acidic residues); it reads KNWDKARERFT.

In terms of assembly, interacts with the secreted angiogenic factor TNFSF12. As to expression, widely expressed. Expressed in endothelial cells, vascular smooth muscle cells and osteoblasts. Expressed in umbilical vein endothelial cells and microvascular endothelial cells.

Its subcellular location is the cytoplasm. It is found in the secreted. Functionally, promotes angiogenesis and the proliferation of endothelial cells. Able to bind to endothelial cells and promote cell proliferation, suggesting that it may act in an autocrine fashion. The chain is Angiogenic factor with G patch and FHA domains 1 (AGGF1) from Homo sapiens (Human).